A 393-amino-acid chain; its full sequence is uncharacterized protein (393 aa).

The OBG-type G domain maps to 2-266 (AMIGLVGKPN…AEKAGIIKRK (265 aa)). GTP is bound by residues 8–15 (GKPNVGKS) and 78–82 (DVAGL). One can recognise a TGS domain in the interval 314-390 (DMIVVYPVED…KHNDIIKIVS (77 aa)).

This sequence belongs to the TRAFAC class OBG-HflX-like GTPase superfamily. OBG GTPase family.

This is an uncharacterized protein from Methanocaldococcus jannaschii (strain ATCC 43067 / DSM 2661 / JAL-1 / JCM 10045 / NBRC 100440) (Methanococcus jannaschii).